A 166-amino-acid polypeptide reads, in one-letter code: Cytochrome c-type biogenesis protein CcmE (166 aa).

At Met-1–Arg-13 the chain is on the cytoplasmic side. A helical; Signal-anchor for type II membrane protein membrane pass occupies residues Leu-14–Gly-34. At Met-35–Thr-166 the chain is on the periplasmic side. Residues His-128 and Tyr-132 each contribute to the heme site. The interval Glu-143–Thr-166 is disordered.

Belongs to the CcmE/CycJ family.

The protein resides in the cell inner membrane. Heme chaperone required for the biogenesis of c-type cytochromes. Transiently binds heme delivered by CcmC and transfers the heme to apo-cytochromes in a process facilitated by CcmF and CcmH. The chain is Cytochrome c-type biogenesis protein CcmE from Caulobacter sp. (strain K31).